A 396-amino-acid chain; its full sequence is Ubiquitin-like modifier-activating enzyme 5 (396 aa).

ATP contacts are provided by Gly76, Asp97, Lys120, Asn143, and Asn177. Residues Cys219 and Cys222 each contribute to the Zn(2+) site. Cys243 serves as the catalytic Glycyl thioester intermediate. Residues Cys296 and Cys301 each contribute to the Zn(2+) site.

The protein belongs to the ubiquitin-activating E1 family. UBA5 subfamily.

In terms of biological role, E1-like enzyme which activates UFM1. The protein is Ubiquitin-like modifier-activating enzyme 5 of Drosophila ananassae (Fruit fly).